Consider the following 77-residue polypeptide: U8-hexatoxin-Mg1a (77 aa).

A signal peptide spans 1–22 (MKVFSFTIGLVVIISLFAFALA). Residues 23 to 43 (YDEETDLMKKLVEMERAIEQR) constitute a propeptide that is removed on maturation. 3 disulfides stabilise this stretch: Cys46–Cys60, Cys53–Cys65, and Cys59–Cys76.

As to expression, expressed by the venom gland.

It localises to the secreted. Functionally, intrathorax injection into crickets causes paralysis prolonged for more than 60 minutes, followed by recovery. The chain is U8-hexatoxin-Mg1a from Macrothele gigas (Japanese funnel web spider).